Here is a 337-residue protein sequence, read N- to C-terminus: Phosphate acyltransferase (337 aa).

It belongs to the PlsX family. As to quaternary structure, homodimer. Probably interacts with PlsY.

It is found in the cytoplasm. It catalyses the reaction a fatty acyl-[ACP] + phosphate = an acyl phosphate + holo-[ACP]. It functions in the pathway lipid metabolism; phospholipid metabolism. In terms of biological role, catalyzes the reversible formation of acyl-phosphate (acyl-PO(4)) from acyl-[acyl-carrier-protein] (acyl-ACP). This enzyme utilizes acyl-ACP as fatty acyl donor, but not acyl-CoA. The protein is Phosphate acyltransferase of Acidobacterium capsulatum (strain ATCC 51196 / DSM 11244 / BCRC 80197 / JCM 7670 / NBRC 15755 / NCIMB 13165 / 161).